The following is a 139-amino-acid chain: uncharacterized protein (139 aa).

The HTH cro/C1-type domain occupies 8–63 (LRELRRARKLTVNQLAVYSGISSATISKIENGKRGTPKPATIKKLAAVLKVPYENL). Positions 19–38 (VNQLAVYSGISSATISKIEN) form a DNA-binding region, H-T-H motif.

This is an uncharacterized protein from Bacillus subtilis (strain 168).